A 570-amino-acid polypeptide reads, in one-letter code: Protein mom-5 (570 aa).

An N-terminal signal peptide occupies residues 1-16 (MHRHILILFLFGCLSA). The Extracellular segment spans residues 17-230 (DQRLSSTSIS…FDGRVRRILR (214 aa)). Positions 32 to 148 (STTRKCEHIT…FPVTDLCVGK (117 aa)) constitute an FZ domain. Disulfide bonds link cysteine 37-cysteine 98, cysteine 45-cysteine 91, cysteine 82-cysteine 119, cysteine 108-cysteine 145, and cysteine 112-cysteine 136. An N-linked (GlcNAc...) asparagine glycan is attached at asparagine 51. Asparagine 149 carries N-linked (GlcNAc...) asparagine glycosylation. Residues 231-251 (IWTAAWSVACFVCSLFTLVTF) traverse the membrane as a helical segment. Residues 252-264 (LVDLSRFAYPVRP) lie on the Cytoplasmic side of the membrane. A helical membrane pass occupies residues 265–285 (ILYLAFCYLAISTVYMIGVVG). The Extracellular portion of the chain corresponds to 286–319 (EDGFACGTYGSTPTTLVTQGGENVGCSALAVVHY). A helical membrane pass occupies residues 320–340 (FFFMSSCAWWLVLCLAWFLAA). The Cytoplasmic portion of the chain corresponds to 341 to 348 (NLKWGAES). The chain crosses the membrane as a helical span at residues 349-369 (IAALSPYFHAMCWGVPAVLSV). Residues 370–395 (TVLVTNSVDGDVFTGICSVGNLNPSA) are Extracellular-facing. A helical transmembrane segment spans residues 396 to 416 (LVYFFFTPIVVSLALGAVLLV). The Cytoplasmic segment spans residues 417-449 (CGIWSMIRIRSYIKLQHADVERNISKLEKLMLR). The helical transmembrane segment at 450–470 (IGAFAIMYSLPTAMNAAIMWY) threads the bilayer. Residues 471–515 (QAVNMPAWLEGWLHHRCVRLQDRELFGFTYPVDDCPMDPKVAAPE) lie on the Extracellular side of the membrane. Residues 516-536 (IIVFLLKYVSQLVVGITCAIW) form a helical membrane-spanning segment. Residues 537 to 570 (VVSSKTLSSYHKAYLALSSRSPTVPAHVDQVNMR) are Cytoplasmic-facing.

It belongs to the G-protein coupled receptor Fz/Smo family.

Its subcellular location is the cell membrane. It is found in the early endosome. In terms of biological role, receptor for Wnt proteins. Most frizzled receptors are coupled to the beta-catenin canonical signaling pathway, which leads to the activation of disheveled proteins, inhibition of gsk-3 kinase, nuclear accumulation of beta-catenin and activation of Wnt target genes. A second signaling pathway involving PKC and calcium fluxes has been seen for some family members, but it is not yet clear if it represents a distinct pathway or if it can be integrated in the canonical pathway, as pkc seems to be required for Wnt-mediated inactivation of gsk-3 kinase. Both pathways seem to involve interactions with G-proteins. Required in embryonic development for the correct positioning and orientation of the mitotic spindles and division planes in blastomere cells. During early embryonic cell divisions, directs the asymmetric positioning of transcription factors such as pop-1 and dsh-2 in daughter cells in order to determine cell fate specification. Acts redundantly with other Wnt receptors such as lin-17 to control vulval precursor cell specification and also the polarity of different cell types including distal tip cells, seam cells, AVG interneurons and P-cells and their descendants. Plays a role in the migration of cell types including distal tip cells and the QR neuroblast descendants, QR.p and QR.pa during larval development. Negatively regulates the unc-6/Netrin receptors unc-5 and unc-40 to control distal tip cell polarity and migration. Acts through ced-5/DOCK180 and ced-10/Rac to control both distal tip cell migration and the phagocytic clearance of apoptotic cell corpses. Furthermore, it is also required for the migration and axon guidance of the different neuronal cell types including CAN, ALM, HSN and the two mechanosensory neurons AVM and PVM. Mediates Wnt receptor cfz-2 in directing ALM migration, but may also act redundantly with the Wnt receptors cfz-2 and mig-1 to direct the migration of other neuronal cell types including CAN and HSN. Mediates Wnt ligand egl-20 in the control of the anterior-posterior axon guidance of AVM and PVM neurons. This chain is Protein mom-5, found in Caenorhabditis elegans.